Reading from the N-terminus, the 513-residue chain is ATP synthase subunit alpha, mitochondrial (513 aa).

Residue 170-177 coordinates ATP; it reads GDRQTGKT.

This sequence belongs to the ATPase alpha/beta chains family. In terms of assembly, F-type ATPases have 2 components, CF(1) - the catalytic core - and CF(0) - the membrane proton channel. CF(1) has five subunits: alpha(3), beta(3), gamma(1), delta(1), epsilon(1). CF(0) has three main subunits: a, b and c.

The protein localises to the mitochondrion. It localises to the mitochondrion inner membrane. Functionally, mitochondrial membrane ATP synthase (F(1)F(0) ATP synthase or Complex V) produces ATP from ADP in the presence of a proton gradient across the membrane which is generated by electron transport complexes of the respiratory chain. F-type ATPases consist of two structural domains, F(1) - containing the extramembraneous catalytic core, and F(0) - containing the membrane proton channel, linked together by a central stalk and a peripheral stalk. During catalysis, ATP synthesis in the catalytic domain of F(1) is coupled via a rotary mechanism of the central stalk subunits to proton translocation. Subunits alpha and beta form the catalytic core in F(1). Rotation of the central stalk against the surrounding alpha(3)beta(3) subunits leads to hydrolysis of ATP in three separate catalytic sites on the beta subunits. Subunit alpha does not bear the catalytic high-affinity ATP-binding sites. The chain is ATP synthase subunit alpha, mitochondrial (ATPA) from Marchantia polymorpha (Common liverwort).